The sequence spans 3102 residues: Laminin subunit alpha lam-3 (3102 aa).

An N-terminal signal peptide occupies residues 1-16; sequence MRLWLGLLAVSNIALG. N-linked (GlcNAc...) asparagine glycosylation is found at asparagine 19, asparagine 135, and asparagine 237. The Laminin N-terminal domain maps to 44–295; sequence SERGLFPNIF…SISDISIGGQ (252 aa). 16 cysteine pairs are disulfide-bonded: cysteine 296-cysteine 305, cysteine 298-cysteine 316, cysteine 318-cysteine 327, cysteine 330-cysteine 350, cysteine 353-cysteine 362, cysteine 355-cysteine 387, cysteine 390-cysteine 399, cysteine 402-cysteine 420, cysteine 423-cysteine 435, cysteine 425-cysteine 451, cysteine 453-cysteine 462, cysteine 465-cysteine 475, cysteine 478-cysteine 491, cysteine 480-cysteine 496, cysteine 498-cysteine 507, and cysteine 510-cysteine 525. 4 Laminin EGF-like domains span residues 296 to 352, 353 to 422, 423 to 477, and 478 to 527; these read CICY…VCQQ, CQCF…ACRT, CECD…TCEP, and CPCN…GCQP. Residues 548–740 enclose the Laminin IV type A 1 domain; that stretch reads INNIGWHLTD…QDTLMGGVEV (193 aa). Intrachain disulfides connect cysteine 774-cysteine 783, cysteine 776-cysteine 790, cysteine 793-cysteine 802, cysteine 805-cysteine 822, cysteine 825-cysteine 838, cysteine 827-cysteine 858, cysteine 861-cysteine 870, cysteine 873-cysteine 886, cysteine 889-cysteine 903, cysteine 891-cysteine 910, cysteine 913-cysteine 922, cysteine 925-cysteine 938, cysteine 941-cysteine 953, cysteine 943-cysteine 960, cysteine 962-cysteine 971, cysteine 974-cysteine 985, cysteine 988-cysteine 1000, cysteine 990-cysteine 1007, cysteine 1009-cysteine 1018, cysteine 1021-cysteine 1033, cysteine 1036-cysteine 1049, cysteine 1038-cysteine 1056, cysteine 1058-cysteine 1067, cysteine 1070-cysteine 1083, cysteine 1086-cysteine 1098, cysteine 1088-cysteine 1105, cysteine 1107-cysteine 1116, cysteine 1119-cysteine 1131, cysteine 1134-cysteine 1144, cysteine 1137-cysteine 1151, and cysteine 1153-cysteine 1162. 10 Laminin EGF-like domains span residues 774–824, 825–888, 889–940, 941–987, 988–1035, 1036–1085, 1086–1133, 1134–1180, 1181–1226, and 1227–1283; these read CDCH…ACEQ, CECP…KCIE, CTCN…TCKP, CGCH…GCPA, CDCN…GCQF, CHCN…GCED, CGCD…GCTE, CEPC…GCKL, CDCS…TCEP, and CGCN…GCTE. A glycan (N-linked (GlcNAc...) asparagine) is linked at asparagine 796. An N-linked (GlcNAc...) asparagine glycan is attached at asparagine 991. N-linked (GlcNAc...) asparagine glycosylation occurs at asparagine 1027. The N-linked (GlcNAc...) asparagine glycan is linked to asparagine 1076. N-linked (GlcNAc...) asparagine glycosylation occurs at asparagine 1164. Intrachain disulfides connect cysteine 1165-cysteine 1178, cysteine 1181-cysteine 1193, cysteine 1183-cysteine 1200, cysteine 1202-cysteine 1211, cysteine 1214-cysteine 1224, cysteine 1227-cysteine 1246, cysteine 1229-cysteine 1252, cysteine 1254-cysteine 1263, and cysteine 1266-cysteine 1281. An N-linked (GlcNAc...) asparagine glycan is attached at asparagine 1288. The Laminin IV type A 2 domain maps to 1295 to 1496; the sequence is QSDLVWQQMY…STTKAIGVEK (202 aa). 12 disulfide bridges follow: cysteine 1540-cysteine 1549, cysteine 1542-cysteine 1556, cysteine 1559-cysteine 1568, cysteine 1571-cysteine 1587, cysteine 1590-cysteine 1603, cysteine 1592-cysteine 1614, cysteine 1617-cysteine 1626, cysteine 1629-cysteine 1644, cysteine 1647-cysteine 1659, cysteine 1649-cysteine 1666, cysteine 1668-cysteine 1677, and cysteine 1680-cysteine 1691. Laminin EGF-like domains lie at 1540–1589, 1590–1646, and 1647–1693; these read CSCH…ACTK, CACP…TCSP, and CDCH…VCTS. Asparagine 1717, asparagine 1734, asparagine 1777, asparagine 1806, asparagine 1839, asparagine 1875, asparagine 1969, asparagine 1984, and asparagine 2048 each carry an N-linked (GlcNAc...) asparagine glycan. The tract at residues 2061 to 2084 is disordered; sequence EAVSKMLGSEGSESGDANEESLRS. N-linked (GlcNAc...) asparagine glycans are attached at residues asparagine 2091, asparagine 2193, asparagine 2369, and asparagine 2479. 3 consecutive Laminin G-like domains span residues 2467 to 2644, 2652 to 2839, and 2913 to 3088; these read SQRG…TDGC, DKII…IGMC, and RYGL…AKAC. The cysteines at positions 2617 and 2644 are disulfide-linked. N-linked (GlcNAc...) asparagine glycans are attached at residues asparagine 2672 and asparagine 2686. A disulfide bond links cysteine 2814 and cysteine 2839. Asparagine 2932, asparagine 2959, and asparagine 3007 each carry an N-linked (GlcNAc...) asparagine glycan. Cysteine 3058 and cysteine 3088 are joined by a disulfide.

As to quaternary structure, laminin is a complex glycoprotein, consisting of three different polypeptide chains (alpha, beta, gamma), which are bound to each other by disulfide bonds into a cross-shaped molecule comprising one long and three short arms with globules at each end.

It is found in the secreted. The protein resides in the extracellular space. Its subcellular location is the extracellular matrix. The protein localises to the basement membrane. Functionally, binding to cells via a high affinity receptor, laminin is thought to mediate the attachment, migration and organization of cells into tissues during embryonic development by interacting with other extracellular matrix components. Required to assemble a stable basement membrane and for organizing receptor complexes and cytoskeletal components to the proper cell surfaces. During embryogenesis, does not require the presence of collagen type IV in order to associate with cell surfaces, prior to assembly of the prototypical basement membrane. Plays an important role in muscle contraction of the body. Probably plays a distinct role from the related laminin subunit alpha epi-1. This is Laminin subunit alpha lam-3 from Caenorhabditis elegans.